We begin with the raw amino-acid sequence, 380 residues long: Succinyl-diaminopimelate desuccinylase (380 aa).

His-69 is a Zn(2+) binding site. Asp-71 is an active-site residue. Asp-102 is a Zn(2+) binding site. The Proton acceptor role is filled by Glu-135. Residues Glu-136, Glu-164, and His-353 each coordinate Zn(2+).

Belongs to the peptidase M20A family. DapE subfamily. As to quaternary structure, homodimer. Requires Zn(2+) as cofactor. It depends on Co(2+) as a cofactor.

It catalyses the reaction N-succinyl-(2S,6S)-2,6-diaminopimelate + H2O = (2S,6S)-2,6-diaminopimelate + succinate. It functions in the pathway amino-acid biosynthesis; L-lysine biosynthesis via DAP pathway; LL-2,6-diaminopimelate from (S)-tetrahydrodipicolinate (succinylase route): step 3/3. Catalyzes the hydrolysis of N-succinyl-L,L-diaminopimelic acid (SDAP), forming succinate and LL-2,6-diaminopimelate (DAP), an intermediate involved in the bacterial biosynthesis of lysine and meso-diaminopimelic acid, an essential component of bacterial cell walls. The protein is Succinyl-diaminopimelate desuccinylase of Cereibacter sphaeroides (strain ATCC 17023 / DSM 158 / JCM 6121 / CCUG 31486 / LMG 2827 / NBRC 12203 / NCIMB 8253 / ATH 2.4.1.) (Rhodobacter sphaeroides).